A 316-amino-acid polypeptide reads, in one-letter code: Olfactory receptor 2AG1 (316 aa).

At 1–25 (MELWNFTLGSGFILVGILNDSGSPE) the chain is on the extracellular side. Asn5 and Asn19 each carry an N-linked (GlcNAc...) asparagine glycan. A helical membrane pass occupies residues 26-49 (LLCATITILYLLALISNGLLLLAI). At 50 to 57 (TMEARLHM) the chain is on the cytoplasmic side. A helical transmembrane segment spans residues 58-79 (PMYLLLGQLSLMDLLFTSVVTP). At 80-100 (KALADFLRRENTISFGGCALQ) the chain is on the extracellular side. A disulfide bond links Cys97 and Cys189. A helical membrane pass occupies residues 101–120 (MFLALTMGGAEDLLLAFMAY). The Cytoplasmic segment spans residues 121 to 139 (DRYVAICHPLTYMTLMSSR). Residues 140–158 (ACWLMVATSWILASLSALI) traverse the membrane as a helical segment. The Extracellular segment spans residues 159-195 (YTVYTMHYPFCRAQEIRHLLCEIPHLLKVACADTSRY). The chain crosses the membrane as a helical span at residues 196-219 (ELMVYVMGVTFLIPSLAAILASYT). Topologically, residues 220 to 236 (QILLTVLHMPSNEGRKK) are cytoplasmic. Residues 237–259 (ALVTCSSHLTVVGMFYGAATFMY) traverse the membrane as a helical segment. Residues 260–272 (VLPSSFHSTRQDN) lie on the Extracellular side of the membrane. Residues 273 to 292 (IISVFYTIVTPALNPLIYSL) traverse the membrane as a helical segment. Residues 293–316 (RNKEVMRALRRVLGKYMLPAHSTL) are Cytoplasmic-facing.

The protein belongs to the G-protein coupled receptor 1 family.

It is found in the cell membrane. Functionally, odorant receptor. The polypeptide is Olfactory receptor 2AG1 (OR2AG1) (Homo sapiens (Human)).